The chain runs to 207 residues: Protein GrpE (207 aa).

Belongs to the GrpE family. Homodimer.

It is found in the cytoplasm. Participates actively in the response to hyperosmotic and heat shock by preventing the aggregation of stress-denatured proteins, in association with DnaK and GrpE. It is the nucleotide exchange factor for DnaK and may function as a thermosensor. Unfolded proteins bind initially to DnaJ; upon interaction with the DnaJ-bound protein, DnaK hydrolyzes its bound ATP, resulting in the formation of a stable complex. GrpE releases ADP from DnaK; ATP binding to DnaK triggers the release of the substrate protein, thus completing the reaction cycle. Several rounds of ATP-dependent interactions between DnaJ, DnaK and GrpE are required for fully efficient folding. The polypeptide is Protein GrpE (Pelodictyon phaeoclathratiforme (strain DSM 5477 / BU-1)).